A 1698-amino-acid chain; its full sequence is Bromodomain adjacent to zinc finger domain protein 2A (1698 aa).

Disordered stretches follow at residues 240–262 (QSTP…QLPS) and 352–387 (VMQE…MTIE). The span at 377–387 (ENVSQDEMTIE) shows a compositional bias: polar residues. The MBD domain occupies 418–489 (IATPEQVCFP…EHFSFSPRMP (72 aa)). Disordered regions lie at residues 524–550 (RGRP…PPKV) and 610–653 (EKEE…DRKL). The segment covering 528-540 (RNLEKAKAKEQKA) has biased composition (basic and acidic residues). A DNA-binding region (a.T hook 1) is located at residues 541–553 (KRGRGRPPKVKMI). A coiled-coil region spans residues 579 to 638 (VQLCKLKKKMRRKARNQEAKLEAAKKLKEIKEKEEKKQKIQKAKNQEKAKNQEKKRTRRQ). The span at 610–632 (EKEEKKQKIQKAKNQEKAKNQEK) shows a compositional bias: basic and acidic residues. The 66-residue stretch at 701–766 (SCAFSDCLTT…LQAAMINPGL (66 aa)) folds into the DDT domain. Disordered regions lie at residues 884 to 905 (ITTT…NDEL), 1013 to 1063 (SFGS…PLTN), 1088 to 1110 (TVLT…SEAT), and 1123 to 1149 (TPCR…TAAT). Over residues 890-900 (SLRRRSERNAE) the composition is skewed to basic and acidic residues. 2 stretches are compositionally biased toward polar residues: residues 1023–1040 (HPRN…SCHC) and 1051–1063 (VTDQ…PLTN). Positions 1091–1108 (TPESSPPHSESTPIISSE) are enriched in low complexity. The span at 1124-1149 (PCRNHNQGLSTHSSNRLSPPSPTAAT) shows a compositional bias: polar residues. Positions 1204–1216 (EKRRGRRPSKLLK) form a DNA-binding region, a.T hook 3. The PHD-type zinc-finger motif lies at 1476–1526 (KVTCLYCRKGDNDELLLLCDSCDRGCHTYCHRPRMNEIPEGDWFCPTCISL). The segment at 1549-1587 (FTEDSPSKPSRRREHPTASQFSPGESPASKKRRMGTRSQ) is disordered. One can recognise a Bromo domain in the interval 1585-1689 (RSQSPDLTFC…KFYDARWEEF (105 aa)).

Belongs to the WAL family. Component of the NoRC complex, at least composed of SMARCA5/SNF2H and BAZ2A/TIP5.

Its subcellular location is the nucleus. It localises to the nucleolus. Essential component of the NoRC (nucleolar remodeling complex) complex, a complex that mediates silencing of a fraction of rDNA by recruiting histone-modifying enzymes and DNA methyltransferases, leading to heterochromatin formation and transcriptional silencing. In the complex, it plays a central role by being recruited to rDNA and by targeting chromatin modifying enzymes such as HDAC1, leading to repress RNA polymerase I transcription. Recruited to rDNA via its interaction with TTF1 and its ability to recognize and bind histone H4 acetylated on 'Lys-16' (H4K16ac), leading to deacetylation of H4K5ac, H4K8ac, H4K12ac but not H4K16ac. Specifically binds pRNAs, 150-250 nucleotide RNAs that are complementary in sequence to the rDNA promoter; pRNA-binding is required for heterochromatin formation and rDNA silencing. This is Bromodomain adjacent to zinc finger domain protein 2A (baz2a) from Xenopus laevis (African clawed frog).